A 1040-amino-acid chain; its full sequence is Protocadherin-10 (1040 aa).

Positions 1-18 (MIVLLLFALLWMVEGVFS) are cleaved as a signal peptide. 6 consecutive Cadherin domains span residues 19 to 122 (QLHY…PPSF), 123 to 250 (PEPD…VPAF), 251 to 358 (DQPV…APEI), 359 to 463 (SFST…APRF), 464 to 574 (SQPV…APAI), and 582 to 690 (NGTP…GGGG). At 19–715 (QLHYTVQEEQ…GGGETSLDLT (697 aa)) the chain is on the extracellular side. The span at 207-223 (GGGGGVGEGGGGGGGAG) shows a compositional bias: gly residues. The tract at residues 207-228 (GGGGGVGEGGGGGGGAGLPPQQ) is disordered. The N-linked (GlcNAc...) asparagine glycan is linked to Asn273. Asn557 is a glycosylation site (N-linked (GlcNAc...) asparagine). A compositionally biased stretch (gly residues) spans 686–697 (QGGGGSGGGGSG). The interval 686–708 (QGGGGSGGGGSGEHQRPSRSGGG) is disordered. The helical transmembrane segment at 716 to 736 (LILIIALGSVSFIFLLAMIVL) threads the bilayer. Topologically, residues 737 to 1040 (AVRCQKEKKL…PPYLTRKRIC (304 aa)) are cytoplasmic. The segment at 899 to 927 (AFQEADIVSSKDSGHGDSEQGDSDHDATN) is disordered. A compositionally biased stretch (basic and acidic residues) spans 910 to 926 (DSGHGDSEQGDSDHDAT).

In terms of tissue distribution, moderately expressed in all regions of the brain examined, as well as in testis and ovary, and low expression in all other tissues tested.

It localises to the cell membrane. In terms of biological role, potential calcium-dependent cell-adhesion protein. (Microbial infection) Acts as a receptor for Western equine encephalitis virus. In Homo sapiens (Human), this protein is Protocadherin-10 (PCDH10).